The chain runs to 290 residues: ATP synthase gamma chain (290 aa).

This sequence belongs to the ATPase gamma chain family. F-type ATPases have 2 components, CF(1) - the catalytic core - and CF(0) - the membrane proton channel. CF(1) has five subunits: alpha(3), beta(3), gamma(1), delta(1), epsilon(1). CF(0) has three main subunits: a, b and c.

Its subcellular location is the cell inner membrane. Its function is as follows. Produces ATP from ADP in the presence of a proton gradient across the membrane. The gamma chain is believed to be important in regulating ATPase activity and the flow of protons through the CF(0) complex. This Bacteroides fragilis (strain ATCC 25285 / DSM 2151 / CCUG 4856 / JCM 11019 / LMG 10263 / NCTC 9343 / Onslow / VPI 2553 / EN-2) protein is ATP synthase gamma chain.